Consider the following 662-residue polypeptide: MVHVRYGGQNGEQYELAISENHIVVRTESRSSLISDRPFEAAPVSPQARNILNQFELSTRFSQAGVEVLHVKEPSHDGALRDTAREILNQEPEVQFAGRVLIDPVSQQPIVYTENLFVKFDHEEDVSFCQEILGRYGLTIKRQLEYARNAYFVSAPSNTGLAIFDISERLLNEESVELCHPELVREFRQRQAFPPQWHLKQTTIGGKTINAHANVEAAWKLSDGTGTIIAIIDDGVDIDHEEFRSSGKIVAPRDVTRKTNFPTPGNRDNHGTACAGVACGNGNFGASGVAPGAKLMPIRFVSALGSQDEADSFVWAAQNGADVISCSWGPPDGTWWDDKDPLHKQKVPLPDSTRLAMDYAINKGRNGKGCVILFAAGNGNESVDNDGYASYEKVIAVAACNDFGTRSAYSDFGTAVWCAFPSNNGNPSQTPGIWTADRTGVVGYNSGNTNLGDQAGNYTNSFGGTSSACPGAAGVAALILSRNPNLRWDEVRDIIKRSCDRIDPVGGNYNAEGRSPFYGYGRINALKAVELALPAQPEPVSIFTAVQDVPINDLQISQLSLAIANTNPIKSIKVTVDIEHTYIGDLVVSLNPPAESGVLPIILHDRKGGGADDIKQTYDEVSTPGLTALKGKIPQGTWTLEVADKAQADTGKIRSLTIELGF.

The Peptidase S8 domain maps to 196–529 (QWHLKQTTIG…YGRINALKAV (334 aa)). Catalysis depends on charge relay system residues D233, H270, and S466. The 128-residue stretch at 535–662 (AQPEPVSIFT…IRSLTIELGF (128 aa)) folds into the P/Homo B domain.

It belongs to the peptidase S8 family.

The protein resides in the cytoplasm. Degrades phycobiliproteins in vitro. Has a substrate specificity similar to that of trypsin. The polypeptide is Calcium-dependent protease (prcA) (Trichormus variabilis (strain ATCC 29413 / PCC 7937) (Anabaena variabilis)).